We begin with the raw amino-acid sequence, 364 residues long: D-alanine--D-alanine ligase (364 aa).

The ATP-grasp domain maps to 134 to 344 (KVLLKSFNIP…YESLVDKLIT (211 aa)). 167–222 (NNKLNYPVIVKPSVLGSSIGINVAYNVSQIEKYIEEAFEYDLTVVVEKFIKAREIE) serves as a coordination point for ATP. Residues Asp297, Glu311, and Asn313 each coordinate Mg(2+).

This sequence belongs to the D-alanine--D-alanine ligase family. It depends on Mg(2+) as a cofactor. Requires Mn(2+) as cofactor.

The protein resides in the cytoplasm. The catalysed reaction is 2 D-alanine + ATP = D-alanyl-D-alanine + ADP + phosphate + H(+). It functions in the pathway cell wall biogenesis; peptidoglycan biosynthesis. In terms of biological role, cell wall formation. In Borrelia recurrentis (strain A1), this protein is D-alanine--D-alanine ligase.